The following is a 286-amino-acid chain: ATP-binding protein ChvD (286 aa).

In terms of domain architecture, ABC transporter spans 21-85 (KLQDMIDSQN…DLLLLDEPTN (65 aa)).

The protein belongs to the ABC transporter superfamily.

Its function is as follows. The induction of virG by growth under acidic conditions and by phosphate starvation, in the absence of plant inducers, is influenced by ChvD. The sequence is that of ATP-binding protein ChvD (chvD) from Rhizobium radiobacter (Agrobacterium tumefaciens).